Here is a 251-residue protein sequence, read N- to C-terminus: Adenosine 5'-phosphosulfate reductase (251 aa).

[4Fe-4S] cluster contacts are provided by Cys-121, Cys-122, Cys-204, and Cys-207. The active-site Nucleophile; cysteine thiosulfonate intermediate is Cys-232.

The protein belongs to the PAPS reductase family. CysH subfamily. [4Fe-4S] cluster serves as cofactor.

It localises to the cytoplasm. The enzyme catalyses [thioredoxin]-disulfide + sulfite + AMP + 2 H(+) = adenosine 5'-phosphosulfate + [thioredoxin]-dithiol. The protein operates within sulfur metabolism; hydrogen sulfide biosynthesis; sulfite from sulfate. Functionally, catalyzes the formation of sulfite from adenosine 5'-phosphosulfate (APS) using thioredoxin as an electron donor. In Sinorhizobium fredii (strain USDA 257), this protein is Adenosine 5'-phosphosulfate reductase.